Here is a 607-residue protein sequence, read N- to C-terminus: Elongation factor 4 (607 aa).

Residues 11–193 form the tr-type G domain; that stretch reads KKIRNFSIIA…QIVELVPPPT (183 aa). GTP-binding positions include 23–28 and 140–143; these read DHGKST and NKID.

It belongs to the TRAFAC class translation factor GTPase superfamily. Classic translation factor GTPase family. LepA subfamily.

The protein resides in the cell membrane. It catalyses the reaction GTP + H2O = GDP + phosphate + H(+). Its function is as follows. Required for accurate and efficient protein synthesis under certain stress conditions. May act as a fidelity factor of the translation reaction, by catalyzing a one-codon backward translocation of tRNAs on improperly translocated ribosomes. Back-translocation proceeds from a post-translocation (POST) complex to a pre-translocation (PRE) complex, thus giving elongation factor G a second chance to translocate the tRNAs correctly. Binds to ribosomes in a GTP-dependent manner. The protein is Elongation factor 4 of Exiguobacterium sp. (strain ATCC BAA-1283 / AT1b).